Reading from the N-terminus, the 277-residue chain is Phosphate import ATP-binding protein PstB 2 (277 aa).

The ABC transporter domain maps to 31–272; the sequence is IEVPGLNLFY…PAKKQTEDYI (242 aa). 63–70 lines the ATP pocket; the sequence is GPSGCGKS.

It belongs to the ABC transporter superfamily. Phosphate importer (TC 3.A.1.7) family. In terms of assembly, the complex is composed of two ATP-binding proteins (PstB), two transmembrane proteins (PstC and PstA) and a solute-binding protein (PstS).

The protein localises to the cell inner membrane. The catalysed reaction is phosphate(out) + ATP + H2O = ADP + 2 phosphate(in) + H(+). Functionally, part of the ABC transporter complex PstSACB involved in phosphate import. Responsible for energy coupling to the transport system. The sequence is that of Phosphate import ATP-binding protein PstB 2 from Pseudomonas savastanoi pv. phaseolicola (strain 1448A / Race 6) (Pseudomonas syringae pv. phaseolicola (strain 1448A / Race 6)).